The chain runs to 329 residues: Ubiquitin carboxyl-terminal hydrolase isozyme L5 (329 aa).

Residues 7–225 (EWCLMESDPG…IRFNLMAIVS (219 aa)) enclose the UCH catalytic domain. N6-succinyllysine is present on lysine 47. Catalysis depends on cysteine 88, which acts as the Nucleophile. An N6-acetyllysine modification is found at lysine 158. The active-site Proton donor is histidine 164. Lysine 289 carries the N6-succinyllysine modification. A ULD domain is found at 291–319 (NYLPFIMELLKTLAEHQQLIPLVEKAKEK). The tract at residues 313–329 (VEKAKEKQNAKKAQETK) is interaction with ADRM1.

This sequence belongs to the peptidase C12 family. Component of the 19S (PA700) regulatory complex of the 26S proteasome. Interacts with ADRM1 and NFRKB. Component of the INO80 complex; specifically part of a complex module associated with N-terminus of INO80.

It localises to the cytoplasm. The protein resides in the nucleus. The enzyme catalyses Thiol-dependent hydrolysis of ester, thioester, amide, peptide and isopeptide bonds formed by the C-terminal Gly of ubiquitin (a 76-residue protein attached to proteins as an intracellular targeting signal).. Activated by ADRM1. Inhibited by interaction with NFRKB. In terms of biological role, protease that specifically cleaves 'Lys-48'-linked polyubiquitin chains. Deubiquitinating enzyme associated with the 19S regulatory subunit of the 26S proteasome. Putative regulatory component of the INO80 complex; however is inactive in the INO80 complex and is activated by a transient interaction of the INO80 complex with the proteasome via ADRM1. This is Ubiquitin carboxyl-terminal hydrolase isozyme L5 (UCHL5) from Sus scrofa (Pig).